A 565-amino-acid chain; its full sequence is Ubiquitin carboxyl-terminal hydrolase 21 (565 aa).

Over residues 1–14 (MPQASEHRLGRTRE) the composition is skewed to basic and acidic residues. Disordered stretches follow at residues 1–103 (MPQA…LPLP), 109–128 (ARSKSVSSGDLRPMGIALGG), and 142–163 (LALRPEPPPLRRSTSLRRLGGF). The segment covering 42-57 (APGPNPMLRPLPPRPG) has biased composition (pro residues). Positions 58-70 (PPEERLKKLELGR) are enriched in basic and acidic residues. Residues 71 to 82 (GRTSGPRPSGPL) are compositionally biased toward low complexity. The Nuclear export signal motif lies at 134–152 (ELGAALSRLALRPEPPPLR). Residues 212 to 558 (VGLRNLGNTC…EGYVLFYQLM (347 aa)) form the USP domain. The active-site Nucleophile is the C221. The Zn(2+) site is built by C384, C387, C437, and C440. The Proton acceptor role is filled by H518.

Belongs to the peptidase C19 family. USP21 subfamily. In terms of assembly, interacts with BEND3.

The protein resides in the cytoplasm. It localises to the nucleus. The enzyme catalyses Thiol-dependent hydrolysis of ester, thioester, amide, peptide and isopeptide bonds formed by the C-terminal Gly of ubiquitin (a 76-residue protein attached to proteins as an intracellular targeting signal).. Functionally, deubiquitinating enzyme that hydrolyzes 'Lys-6'- and 'Lys-11'-linked polyubiquitin. Also hydrolyzes heterotypic (mixed and branched) and homotypic chains. Important regulator of energy metabolism. Glucose and fatty acids trigger its nuclear translocation by CBP-dependent acetylation. In the nucleus, deubiquitinates and stabilizes the nuclear receptor PPARD regulating the expression of various genes involved in glucose and lipid metabolism and oxidative phosphorylation. Also acts as a negative regulator of the ribosome quality control (RQC) by mediating deubiquitination of 40S ribosomal proteins RPS10/eS10 and RPS20/uS10, thereby antagonizing ZNF598-mediated 40S ubiquitination. The sequence is that of Ubiquitin carboxyl-terminal hydrolase 21 (USP21) from Bos taurus (Bovine).